The primary structure comprises 169 residues: Putative tRNA (cytidine(34)-2'-O)-methyltransferase (169 aa).

Residues I79, G104, I125, and S133 each contribute to the S-adenosyl-L-methionine site.

Belongs to the class IV-like SAM-binding methyltransferase superfamily. RNA methyltransferase TrmH family. TrmL subfamily.

The protein resides in the cytoplasm. The catalysed reaction is cytidine(34) in tRNA + S-adenosyl-L-methionine = 2'-O-methylcytidine(34) in tRNA + S-adenosyl-L-homocysteine + H(+). It catalyses the reaction 5-carboxymethylaminomethyluridine(34) in tRNA(Leu) + S-adenosyl-L-methionine = 5-carboxymethylaminomethyl-2'-O-methyluridine(34) in tRNA(Leu) + S-adenosyl-L-homocysteine + H(+). Functionally, could methylate the ribose at the nucleotide 34 wobble position in tRNA. The polypeptide is Putative tRNA (cytidine(34)-2'-O)-methyltransferase (Listeria innocua serovar 6a (strain ATCC BAA-680 / CLIP 11262)).